A 371-amino-acid chain; its full sequence is Enterobactin C-glucosyltransferase (371 aa).

This sequence belongs to the glycosyltransferase 28 family.

It is found in the cytoplasm. The enzyme catalyses enterobactin + UDP-alpha-D-glucose = monoglucosyl-enterobactin + UDP. It catalyses the reaction monoglucosyl-enterobactin + UDP-alpha-D-glucose = diglucosyl-enterobactin + UDP + H(+). It carries out the reaction diglucosyl-enterobactin + UDP-alpha-D-glucose = triglucosyl-enterobactin + UDP + H(+). It functions in the pathway siderophore biosynthesis; enterobactin biosynthesis. In terms of biological role, catalyzes the successive monoglucosylation, diglucosylation and triglucosylation of enterobactin (Ent). Transfers glucosyl groups from uridine-5'-diphosphoglucose (UDP-Glc) to C5 of one, two or three of the 2,3-dihydroxybenzoyl (DHB) units of Ent to yield monoglucosyl-C-Ent (MGE), diglucosyl-C-Ent (DGE) and triglucosyl-C-Ent (TGE). Glucosylation decreases the membrane affinity of Ent and increases the iron acquisition rate. The chain is Enterobactin C-glucosyltransferase from Escherichia coli O6:H1 (strain CFT073 / ATCC 700928 / UPEC).